The sequence spans 325 residues: Phenylalanine--tRNA ligase alpha subunit (325 aa).

Glutamate 251 is a binding site for Mg(2+).

The protein belongs to the class-II aminoacyl-tRNA synthetase family. Phe-tRNA synthetase alpha subunit type 1 subfamily. In terms of assembly, tetramer of two alpha and two beta subunits. It depends on Mg(2+) as a cofactor.

The protein resides in the cytoplasm. The enzyme catalyses tRNA(Phe) + L-phenylalanine + ATP = L-phenylalanyl-tRNA(Phe) + AMP + diphosphate + H(+). The chain is Phenylalanine--tRNA ligase alpha subunit from Thermotoga petrophila (strain ATCC BAA-488 / DSM 13995 / JCM 10881 / RKU-1).